The chain runs to 588 residues: Transcriptional regulatory protein ASH1 (588 aa).

Ser-56 is modified (phosphoserine). Disordered stretches follow at residues 85 to 109 (SNTAPASPHHMDYNPISSLTPGNSP), 377 to 398 (SNNSKSNVRKPSKNKISKQASN), and 417 to 495 (SSVS…TRHT). Residues 99–109 (PISSLTPGNSP) are compositionally biased toward polar residues. Over residues 383–392 (NVRKPSKNKI) the composition is skewed to basic residues. The span at 417 to 433 (SSVSASSSPSPSTPTKS) shows a compositional bias: low complexity. Ser-465 is subject to Phosphoserine. Residues 470-493 (PRRSSNSSITKKGSRRSSGSSPTR) show a composition bias toward low complexity. The GATA-type; atypical zinc-finger motif lies at 499–526 (CVSCHSSDSPCWRPSWSPRKQDQLCNSC).

In terms of assembly, component of the RPD3C(L) complex composed of at least ASH1, CTI6, DEP1, PHO23, RPD3, RXT2, RXT3, SAP30, SDS3, SIN3, UME1 and UME6.

It is found in the nucleus. Component of the RPD3C(L) histone deacetylase complex (HDAC). Responsible for the deacetylation of lysine residues on the N-terminal part of the core histones (H2A, H2B, H3 and H4). Histone deacetylation gives a tag for epigenetic repression and plays an important role in transcriptional regulation, cell cycle progression and developmental events. ASH1 is necessary to repress HO in daughter cells to block mating-type switching through its binding to HO promoter 5'-YTGAT-3' sites. Also involved in pseudohyphal growth. The sequence is that of Transcriptional regulatory protein ASH1 (ASH1) from Saccharomyces cerevisiae (strain ATCC 204508 / S288c) (Baker's yeast).